The following is a 345-amino-acid chain: Histidinol-phosphate aminotransferase (345 aa).

Position 205 is an N6-(pyridoxal phosphate)lysine (Lys-205).

The protein belongs to the class-II pyridoxal-phosphate-dependent aminotransferase family. Histidinol-phosphate aminotransferase subfamily. Homodimer. Pyridoxal 5'-phosphate is required as a cofactor.

The catalysed reaction is L-histidinol phosphate + 2-oxoglutarate = 3-(imidazol-4-yl)-2-oxopropyl phosphate + L-glutamate. It participates in amino-acid biosynthesis; L-histidine biosynthesis; L-histidine from 5-phospho-alpha-D-ribose 1-diphosphate: step 7/9. The protein is Histidinol-phosphate aminotransferase of Parabacteroides distasonis (strain ATCC 8503 / DSM 20701 / CIP 104284 / JCM 5825 / NCTC 11152).